The chain runs to 419 residues: Gamma-glutamyl phosphate reductase (419 aa).

Belongs to the gamma-glutamyl phosphate reductase family.

The protein resides in the cytoplasm. It carries out the reaction L-glutamate 5-semialdehyde + phosphate + NADP(+) = L-glutamyl 5-phosphate + NADPH + H(+). It participates in amino-acid biosynthesis; L-proline biosynthesis; L-glutamate 5-semialdehyde from L-glutamate: step 2/2. In terms of biological role, catalyzes the NADPH-dependent reduction of L-glutamate 5-phosphate into L-glutamate 5-semialdehyde and phosphate. The product spontaneously undergoes cyclization to form 1-pyrroline-5-carboxylate. This is Gamma-glutamyl phosphate reductase from Mannheimia succiniciproducens (strain KCTC 0769BP / MBEL55E).